The chain runs to 454 residues: MNLRIKKWLEKLDQFEKILVHMPSIMYCGKLIGINGLVLEVSGLKLPIGTICIVEKNNSILDSDMIEAEVIGFRRNLLLLLLLSNVSDLTADSKVTPKILNGSYYNINKLPVCDKLLGRIVDGLGKPLDNFSKIDSKYNVSLTNVSINPLHREPVTHVLDTGIRSINGLLTIGRGQKIGLFASSGLGKSVLLGMMTRYTQADIVILSLIGERGREVKEFIDSVLTETVLSRSIVISAPSESSVLMQTRGAIYAMRIAEYFRDKNFHVLLIMDSLTRYAMAHREISLSIGELPVSKGYPPSVFSKLFSLIERAGNGKINSGSITAFFTVLTEEEERYDPISESARSILDGHIILSREYAESGHYPAINIENSISRVMPNIVDSSHYSFACHFKKIVSLYQRNRDLINVGAYISGTDPDLDMAITLIPKLNKFLQQGMLEKSNFLDSKKSLYSLFN.

182 to 189 (ASSGLGKS) is an ATP binding site.

This sequence belongs to the ATPase alpha/beta chains family.

The protein resides in the cytoplasm. It carries out the reaction ATP + H2O + 4 H(+)(in) = ADP + phosphate + 5 H(+)(out). Its function is as follows. Probable catalytic subunit of a protein translocase for flagellum-specific export, or a proton translocase involved in local circuits at the flagellum. May be involved in a specialized protein export pathway that proceeds without signal peptide cleavage. The polypeptide is Flagellum-specific ATP synthase (fliI) (Buchnera aphidicola subsp. Baizongia pistaciae (strain Bp)).